The following is a 674-amino-acid chain: MNGQTPTDGGILYDATETDDEDDLVEVTEAERPAPAIGWAESLPEAAGLKGAELIQAFVKRLPNGPGVYRMLNEAGDVLYVGKARSLKKRVSNYAQGRGHSNRIARMVRETAHMEFVTTRTEIEALLLEANLIKRLRPRFNVLLRDDKSFPYIVVTGDTRAPALYKHRGARSRKGDYFGPFASAGAVGRTINSLQRAFLLRTCTDSVFETRTRPCLLYQIKRCSAPCTNEVSDADYAELVSEAKDFLSGKSQAVKATIASAMAEASENLDFERAALYRDRLAALSHVQSHQGINPAGVEEADVFATHHEGGISCIQVFFFRTGQNWGNRAYFPKADPSIPPAEVLSAFLAQFYDDKPCPRQVLLCAPVEEQELLAQALSEKSGYKVSILVPQRGEKKDLVEHALANAREAHGRKLAETASQGRLLEGFAATFQLPYVPRRIEIYDNSHIMGTNAVGGMVVAGPEGFVKGQYRKFNIKSTDITPGDDFGMMREVMTRRFSRLLKEEGKPDRSAEPGEDAGFPAWPDVILIDGGQGQMTAVRTILKELGIEDCVTAIGVAKGVDRDAGRERFFAEGRESFTLPPRDPVLYFIQRLRDEAHRFAIGSHRARRKKEMVKNPLDEIAGIGPTRKRALLTHFGTAKAVSRAGINDLMSVNGISETVARIVYEHFHEDAAK.

The 79-residue stretch at 64 to 142 (NGPGVYRMLN…IKRLRPRFNV (79 aa)) folds into the GIY-YIG domain. A UVR domain is found at 252 to 287 (QAVKATIASAMAEASENLDFERAALYRDRLAALSHV).

It belongs to the UvrC family. Interacts with UvrB in an incision complex.

It localises to the cytoplasm. Its function is as follows. The UvrABC repair system catalyzes the recognition and processing of DNA lesions. UvrC both incises the 5' and 3' sides of the lesion. The N-terminal half is responsible for the 3' incision and the C-terminal half is responsible for the 5' incision. This Rhizobium meliloti (strain 1021) (Ensifer meliloti) protein is UvrABC system protein C.